We begin with the raw amino-acid sequence, 509 residues long: Photosystem II CP47 reaction center protein (509 aa).

Transmembrane regions (helical) follow at residues 21–36, 101–115, 140–156, 203–218, 237–252, and 457–472; these read AVHLMHTALVAGWAGS, IVLSGMLFLAAIWHW, GIHLLLSSLLCFGFGAF, IAAGTVGILAGVFHLT, VLSSSISAVFFSAFIT, and NFALIFFFGHLWHGSR.

The protein belongs to the PsbB/PsbC family. PsbB subfamily. PSII is composed of 1 copy each of membrane proteins PsbA, PsbB, PsbC, PsbD, PsbE, PsbF, PsbH, PsbI, PsbJ, PsbK, PsbL, PsbM, PsbT, PsbX, PsbY, PsbZ, Psb30/Ycf12, at least 3 peripheral proteins of the oxygen-evolving complex and a large number of cofactors. It forms dimeric complexes. Binds multiple chlorophylls. PSII binds additional chlorophylls, carotenoids and specific lipids. is required as a cofactor.

The protein resides in the plastid. It localises to the chloroplast thylakoid membrane. Functionally, one of the components of the core complex of photosystem II (PSII). It binds chlorophyll and helps catalyze the primary light-induced photochemical processes of PSII. PSII is a light-driven water:plastoquinone oxidoreductase, using light energy to abstract electrons from H(2)O, generating O(2) and a proton gradient subsequently used for ATP formation. This Porphyra purpurea (Red seaweed) protein is Photosystem II CP47 reaction center protein.